Reading from the N-terminus, the 28-residue chain is Conotoxin as14b (28 aa).

2 disulfide bridges follow: Cys7-Cys27 and Cys11-Cys23.

This sequence belongs to the conotoxin L superfamily. In terms of tissue distribution, expressed by the venom duct.

It is found in the secreted. In terms of biological role, in vivo, intracranial injection elicits scratching and grooming activity in mice, and causes body and rear limb extension and tail curling immediately upon injection. The protein is Conotoxin as14b of Conus cancellatus (Cancellate cone).